A 331-amino-acid polypeptide reads, in one-letter code: Centriolar satellite-associated tubulin polyglutamylase complex regulator 1 (331 aa).

The required for interaction with PCM1 stretch occupies residues Met1–Asp111. The tract at residues Met1 to Glu225 is required for interaction with TPGS1, LRRC49, and TTLL1. Residues Phe112–Thr331 are required for interaction with TPGS2. Positions Ser288–Thr331 are disordered. Over residues Glu318–Thr331 the composition is skewed to acidic residues. Ser319 carries the post-translational modification Phosphoserine.

It belongs to the CSTPP1 family. As to quaternary structure, interacts with PCM1. Interacts with TTLL1, TPGS1, TPGS2 and LRRC49; the interactions link CSTPP1 to the complex TPGC. Binds to alpha-tubulin.

It is found in the cytoplasm. The protein localises to the cytoskeleton. The protein resides in the microtubule organizing center. Its subcellular location is the centrosome. It localises to the centriolar satellite. In terms of biological role, regulator of the tubulin polyglutamylase complex (TPGC) that controls cytoskeletal organization, nuclear shape, and cilium disassembly by balancing microtubule and actin assembly. Regulates the assembly and stability of the TPGC and thereby modulates polyglutamylation of the microtubule, which antagonizes MAP4 binding. The chain is Centriolar satellite-associated tubulin polyglutamylase complex regulator 1 from Homo sapiens (Human).